A 300-amino-acid polypeptide reads, in one-letter code: F-box/LRR-repeat protein 15 (300 aa).

Met1 is subject to N-acetylmethionine. The region spanning 19 to 66 (FLDLPWEDVLLPHVLNRVPLRQLLRLQRVSRAFRSLVQLHLAGLRRFD) is the F-box domain. The tract at residues 113-269 (NPQLRSVALG…ESSLSRLRKR (157 aa)) is interaction with SMURF1. 5 LRR repeats span residues 141-162 (RLQRLSLAHCDWVDGLALRGLA), 167-188 (ALEELDLTACRQLKDEAIVYLA), 194-215 (GLRSLSLAVNANVGDAAVQELA), 220-241 (ELHHLDLTGCLRVGSDGVRTLA), and 246-267 (VLRSLRVRHCHHVAESSLSRLR).

The protein belongs to the FBXL15 family. Part of the SCF (SKP1-CUL1-F-box) E3 ubiquitin-protein ligase complex SCF(FBXL15) composed of CUL1, SKP1, RBX1 and FBXL15.

It is found in the cytoplasm. The protein operates within protein modification; protein ubiquitination. Substrate recognition component of a SCF (SKP1-CUL1-F-box protein) E3 ubiquitin-protein ligase complex which mediates the ubiquitination and subsequent proteasomal degradation of SMURF1, thereby acting as a positive regulator of the BMP signaling pathway. Required for dorsal/ventral pattern formation and bone mass maintenance. Also mediates ubiquitination of SMURF2 and WWP2. This Homo sapiens (Human) protein is F-box/LRR-repeat protein 15 (FBXL15).